A 181-amino-acid polypeptide reads, in one-letter code: Macro domain-containing protein in sno 5'region (181 aa).

The Macro domain occupies 1–172 (MTTITLVQGD…TFARELGDAG (172 aa)).

The protein belongs to the MacroD-type family.

The chain is Macro domain-containing protein in sno 5'region from Streptomyces nogalater.